The chain runs to 59 residues: MVQVVLGEDEGIESALRRFKRQVSKAGILADVKRRRHFETPLEKKKRKRIATRRKRRFR.

It belongs to the bacterial ribosomal protein bS21 family.

This Acaryochloris marina (strain MBIC 11017) protein is Small ribosomal subunit protein bS21.